We begin with the raw amino-acid sequence, 963 residues long: Isoleucine--tRNA ligase (963 aa).

The 'HIGH' region motif lies at 66–76 (PYANGDIHIGH). Glutamate 596 provides a ligand contact to L-isoleucyl-5'-AMP. The short motif at 637-641 (KMSKS) is the 'KMSKS' region element. Lysine 640 contributes to the ATP binding site. Positions 926, 929, 946, and 949 each coordinate Zn(2+).

This sequence belongs to the class-I aminoacyl-tRNA synthetase family. IleS type 1 subfamily. Monomer. Zn(2+) is required as a cofactor.

The protein resides in the cytoplasm. It carries out the reaction tRNA(Ile) + L-isoleucine + ATP = L-isoleucyl-tRNA(Ile) + AMP + diphosphate. Functionally, catalyzes the attachment of isoleucine to tRNA(Ile). As IleRS can inadvertently accommodate and process structurally similar amino acids such as valine, to avoid such errors it has two additional distinct tRNA(Ile)-dependent editing activities. One activity is designated as 'pretransfer' editing and involves the hydrolysis of activated Val-AMP. The other activity is designated 'posttransfer' editing and involves deacylation of mischarged Val-tRNA(Ile). This Cupriavidus pinatubonensis (strain JMP 134 / LMG 1197) (Cupriavidus necator (strain JMP 134)) protein is Isoleucine--tRNA ligase.